A 574-amino-acid chain; its full sequence is Septation ring formation regulator EzrA (574 aa).

Topologically, residues 1–7 (MPTGTII) are extracellular. Residues 8–26 (LIVSIVIILIIAYVACLIV) form a helical membrane-spanning segment. Topologically, residues 27 to 574 (RKRNDNLLVA…YEKTREAIRY (548 aa)) are cytoplasmic. Residues 105-189 (SAKNAIDSID…IEVEFSEFVM (85 aa)) are a coiled coil.

It belongs to the EzrA family.

The protein localises to the cell membrane. Negative regulator of FtsZ ring formation; modulates the frequency and position of FtsZ ring formation. Inhibits FtsZ ring formation at polar sites. Interacts either with FtsZ or with one of its binding partners to promote depolymerization. This is Septation ring formation regulator EzrA from Streptococcus suis (strain 98HAH33).